Reading from the N-terminus, the 229-residue chain is MCPGIREWPEDERPREKMLRKGAASLSDAELLALIIRTGDTATGKSAIDLGRELISLFGSSLRELGSADMAEITAIKGMGMAKAAGVKAAFTLASRFQGRRLENLDRFTSPRQVFDYFHYELRDCRREYFLVLLLDGKNRIIRRVQVSEGSLNQSIVHPREVFCQAVKESAAAVILVHNHPTGDPTPSQEDIAITRRLKEAGEIMGIRVLDHIIIGDGEYLSFVERGVL.

The tract at residues 1–20 is disordered; that stretch reads MCPGIREWPEDERPREKMLR. Positions 7–19 are enriched in basic and acidic residues; sequence EWPEDERPREKML. The 123-residue stretch at 107 to 229 folds into the MPN domain; that stretch reads RFTSPRQVFD…YLSFVERGVL (123 aa). Zn(2+)-binding residues include H178, H180, and D191. A JAMM motif motif is present at residues 178-191; that stretch reads HNHPTGDPTPSQED.

It belongs to the UPF0758 family.

The chain is UPF0758 protein Ppro_3582 from Pelobacter propionicus (strain DSM 2379 / NBRC 103807 / OttBd1).